Here is a 213-residue protein sequence, read N- to C-terminus: ATP phosphoribosyltransferase (213 aa).

The protein belongs to the ATP phosphoribosyltransferase family. Short subfamily. Heteromultimer composed of HisG and HisZ subunits.

It is found in the cytoplasm. It catalyses the reaction 1-(5-phospho-beta-D-ribosyl)-ATP + diphosphate = 5-phospho-alpha-D-ribose 1-diphosphate + ATP. Its pathway is amino-acid biosynthesis; L-histidine biosynthesis; L-histidine from 5-phospho-alpha-D-ribose 1-diphosphate: step 1/9. Functionally, catalyzes the condensation of ATP and 5-phosphoribose 1-diphosphate to form N'-(5'-phosphoribosyl)-ATP (PR-ATP). Has a crucial role in the pathway because the rate of histidine biosynthesis seems to be controlled primarily by regulation of HisG enzymatic activity. The chain is ATP phosphoribosyltransferase from Bacillus licheniformis (strain ATCC 14580 / DSM 13 / JCM 2505 / CCUG 7422 / NBRC 12200 / NCIMB 9375 / NCTC 10341 / NRRL NRS-1264 / Gibson 46).